We begin with the raw amino-acid sequence, 527 residues long: Secologanin synthase 2 (527 aa).

Residues Met-1 to Ala-11 lie on the Lumenal side of the membrane. The helical transmembrane segment at Ile-12–Trp-32 threads the bilayer. Topologically, residues Phe-33–Phe-527 are cytoplasmic. Cys-470 contacts heme.

This sequence belongs to the cytochrome P450 family. It depends on heme as a cofactor. In terms of tissue distribution, expressed in leaves (especially in leaf epidermis), and, to a lower extent, in roots, stems, flower buds and flowers.

The protein localises to the endoplasmic reticulum membrane. The enzyme catalyses loganin + reduced [NADPH--hemoprotein reductase] + O2 = secologanin + oxidized [NADPH--hemoprotein reductase] + 2 H2O + H(+). It catalyses the reaction secologanin + reduced [NADPH--hemoprotein reductase] + O2 = secoxyloganin + oxidized [NADPH--hemoprotein reductase] + H2O + 2 H(+). Its pathway is alkaloid biosynthesis. Functionally, component of the seco-iridoid and derivatives monoterpenoid indole alkaloids (MIAs, e.g. secologanin) biosynthesis pathway. Catalyzes the conversion of loganin into secologanin. Catalyzes the conversion of secologanin into secoxyloganin. This chain is Secologanin synthase 2, found in Catharanthus roseus (Madagascar periwinkle).